Here is a 492-residue protein sequence, read N- to C-terminus: Glutamate--tRNA ligase (492 aa).

Positions 13-23 (PSPTGTPHVGM) match the 'HIGH' region motif. The 'KMSKS' region signature appears at 257 to 261 (KLSKR). Lys260 lines the ATP pocket.

The protein belongs to the class-I aminoacyl-tRNA synthetase family. Glutamate--tRNA ligase type 1 subfamily. Monomer.

It localises to the cytoplasm. The enzyme catalyses tRNA(Glu) + L-glutamate + ATP = L-glutamyl-tRNA(Glu) + AMP + diphosphate. Its function is as follows. Catalyzes the attachment of glutamate to tRNA(Glu) in a two-step reaction: glutamate is first activated by ATP to form Glu-AMP and then transferred to the acceptor end of tRNA(Glu). The protein is Glutamate--tRNA ligase of Mycolicibacterium paratuberculosis (strain ATCC BAA-968 / K-10) (Mycobacterium paratuberculosis).